We begin with the raw amino-acid sequence, 177 residues long: FMRFamide-related peptides (177 aa).

Residues 1-21 form the signal peptide; sequence MNHPRSIAMLAALWLVVSVTS. Residues 22 to 32 constitute a propeptide that is removed on maturation; that stretch reads TPVRRSPDLEA. Phenylalanine amide is present on phenylalanine 45. The propeptide occupies 47–93; that stretch reads RSTLPVVPPAQPSFLQRYSAPQPAALTADDLMTFLRAYEEDYSSPVS. Phenylalanine amide occurs at positions 102 and 111. Positions 113-131 are excised as a propeptide; it reads RSVDEENSGYQAETNTYPQ. Position 143 is a leucine amide (leucine 143). A propeptide spanning residues 145 to 177 is cleaved from the precursor; the sequence is RDNELSESNDEDRYEVESERTKRSVVDPCNDCA. A disordered region spans residues 145-177; sequence RDNELSESNDEDRYEVESERTKRSVVDPCNDCA. Over residues 149 to 158 the composition is skewed to acidic residues; sequence LSESNDEDRY. Positions 159 to 169 are enriched in basic and acidic residues; sequence EVESERTKRSV.

It belongs to the FARP (FMRFamide related peptide) family. In terms of tissue distribution, only expressed in the CNS and predominantly in the thoracic ganglia. Strongest expression is seen in two pairs of large neurons in each thoracic ganglion. These neurons are ventrolateral neurosecretory cells 1 and 2, they project their axons through transverse nerves into the periphery where axons from the prothoracic ganglion innervate the prothoracic gland.

It localises to the secreted. Functionally, regulates ecdysteroidogenesis by direct innervation of the prothoracic gland by reducing cAMP production via the receptor for myosuppressin. The neurons that innervate the prothoracic gland during the fifth instar are most active during days 0-4, after which they reduce and then peak again on day 6. Expression suppresses the biosynthesis of steroid hormones called ecdysteroids that elicit molting and metamorphosis. This chain is FMRFamide-related peptides, found in Bombyx mori (Silk moth).